Here is a 553-residue protein sequence, read N- to C-terminus: Formate--tetrahydrofolate ligase 2 (553 aa).

Residue 63-70 (TSAGEGKS) coordinates ATP.

It belongs to the formate--tetrahydrofolate ligase family.

The catalysed reaction is (6S)-5,6,7,8-tetrahydrofolate + formate + ATP = (6R)-10-formyltetrahydrofolate + ADP + phosphate. It functions in the pathway one-carbon metabolism; tetrahydrofolate interconversion. The sequence is that of Formate--tetrahydrofolate ligase 2 from Lactobacillus acidophilus (strain ATCC 700396 / NCK56 / N2 / NCFM).